We begin with the raw amino-acid sequence, 160 residues long: MNDLPFWKRKTLAEMTVAEWESLCDGCGLCCLNKIEEWDSGDIYFTSVSCKLLDGESCRCSSYENRWDFVPDCVQLTKENVPDIAWLPPTCGYRLVNEGRDLYWWHPLISGDPETVHAAGISARGRTINENEIDIDDLEDYVVDWPLTVGEEKDEEEEEA.

Belongs to the UPF0260 family.

This is UPF0260 protein Rleg2_0895 from Rhizobium leguminosarum bv. trifolii (strain WSM2304).